The chain runs to 398 residues: Putative transposase y4qJ (398 aa).

It belongs to the transposase 32 family.

This Sinorhizobium fredii (strain NBRC 101917 / NGR234) protein is Putative transposase y4qJ.